We begin with the raw amino-acid sequence, 378 residues long: Flap endonuclease 1 (378 aa).

Residues 1–104 are N-domain; sequence MGVKDLSKVI…SELEKRTERR (104 aa). Asp34 contacts Mg(2+). Residues Arg47 and Arg70 each coordinate DNA. Asp86 is a Mg(2+) binding site. A disordered region spans residues 90–113; sequence PQMKTSELEKRTERRTEAEKQRND. The segment covering 95–113 has biased composition (basic and acidic residues); the sequence is SELEKRTERRTEAEKQRND. The I-domain stretch occupies residues 122-253; the sequence is SVNKFEKRLV…KKAFELIKKY (132 aa). Residues Glu158, Glu160, Asp179, and Asp181 each contribute to the Mg(2+) site. Residue Glu158 coordinates DNA. The DNA site is built by Gly231 and Asp233. Asp233 is a Mg(2+) binding site. The tract at residues 336-344 is interaction with PCNA; the sequence is QQARIDSFF. A disordered region spans residues 348-378; it reads KVVTSETTKRKNEEKNNLKKRGPSLGKKAKK. Basic and acidic residues predominate over residues 354 to 364; the sequence is TTKRKNEEKNN. Basic residues predominate over residues 365-378; that stretch reads LKKRGPSLGKKAKK.

This sequence belongs to the XPG/RAD2 endonuclease family. FEN1 subfamily. Interacts with PCNA. Three molecules of FEN1 bind to one PCNA trimer with each molecule binding to one PCNA monomer. PCNA stimulates the nuclease activity without altering cleavage specificity. Mg(2+) is required as a cofactor. Phosphorylated. Phosphorylation upon DNA damage induces relocalization to the nuclear plasma.

It localises to the nucleus. Its subcellular location is the nucleolus. The protein resides in the nucleoplasm. The protein localises to the mitochondrion. In terms of biological role, structure-specific nuclease with 5'-flap endonuclease and 5'-3' exonuclease activities involved in DNA replication and repair. During DNA replication, cleaves the 5'-overhanging flap structure that is generated by displacement synthesis when DNA polymerase encounters the 5'-end of a downstream Okazaki fragment. It enters the flap from the 5'-end and then tracks to cleave the flap base, leaving a nick for ligation. Also involved in the long patch base excision repair (LP-BER) pathway, by cleaving within the apurinic/apyrimidinic (AP) site-terminated flap. Acts as a genome stabilization factor that prevents flaps from equilibrating into structures that lead to duplications and deletions. Also possesses 5'-3' exonuclease activity on nicked or gapped double-stranded DNA, and exhibits RNase H activity. Also involved in replication and repair of rDNA and in repairing mitochondrial DNA. This chain is Flap endonuclease 1, found in Brugia malayi (Filarial nematode worm).